A 187-amino-acid polypeptide reads, in one-letter code: Large ribosomal subunit protein uL5 (187 aa).

Belongs to the universal ribosomal protein uL5 family. In terms of assembly, part of the 50S ribosomal subunit; part of the 5S rRNA/L5/L18/L25 subcomplex. Contacts the 5S rRNA and the P site tRNA. Forms a bridge to the 30S subunit in the 70S ribosome.

This is one of the proteins that bind and probably mediate the attachment of the 5S RNA into the large ribosomal subunit, where it forms part of the central protuberance. In the 70S ribosome it contacts protein S13 of the 30S subunit (bridge B1b), connecting the 2 subunits; this bridge is implicated in subunit movement. Contacts the P site tRNA; the 5S rRNA and some of its associated proteins might help stabilize positioning of ribosome-bound tRNAs. The protein is Large ribosomal subunit protein uL5 of Saccharopolyspora erythraea (strain ATCC 11635 / DSM 40517 / JCM 4748 / NBRC 13426 / NCIMB 8594 / NRRL 2338).